The following is a 444-amino-acid chain: Transcriptional coactivator nsrH (444 aa).

The region spanning 74 to 144 (ASQVSEILAC…ERDHVAHTPL (71 aa)) is the HTH iclR-type domain. A DNA-binding region (H-T-H motif) is located at residues 104–123 (IKDIADLTNVPESRLRRIIR).

It localises to the nucleus. Transcriptional coactivator; part of the gene cluster that mediates the biosynthesis of the tetrahydroxanthone dimer neosartorin, which exhibits antibacterial activity. The polypeptide is Transcriptional coactivator nsrH (Aspergillus novofumigatus (strain IBT 16806)).